We begin with the raw amino-acid sequence, 381 residues long: Probable tRNA sulfurtransferase (381 aa).

A THUMP domain is found at 52 to 155 (LTNLDALKYV…DASTYIFIDY (104 aa)). Residues 173-174 (LM), 198-199 (NF), Arg-255, Gly-277, and Gln-286 each bind ATP.

The protein belongs to the ThiI family.

It is found in the cytoplasm. The enzyme catalyses [ThiI sulfur-carrier protein]-S-sulfanyl-L-cysteine + a uridine in tRNA + 2 reduced [2Fe-2S]-[ferredoxin] + ATP + H(+) = [ThiI sulfur-carrier protein]-L-cysteine + a 4-thiouridine in tRNA + 2 oxidized [2Fe-2S]-[ferredoxin] + AMP + diphosphate. It carries out the reaction [ThiS sulfur-carrier protein]-C-terminal Gly-Gly-AMP + S-sulfanyl-L-cysteinyl-[cysteine desulfurase] + AH2 = [ThiS sulfur-carrier protein]-C-terminal-Gly-aminoethanethioate + L-cysteinyl-[cysteine desulfurase] + A + AMP + 2 H(+). Its pathway is cofactor biosynthesis; thiamine diphosphate biosynthesis. Functionally, catalyzes the ATP-dependent transfer of a sulfur to tRNA to produce 4-thiouridine in position 8 of tRNAs, which functions as a near-UV photosensor. Also catalyzes the transfer of sulfur to the sulfur carrier protein ThiS, forming ThiS-thiocarboxylate. This is a step in the synthesis of thiazole, in the thiamine biosynthesis pathway. The sulfur is donated as persulfide by IscS. This Metamycoplasma arthritidis (strain 158L3-1) (Mycoplasma arthritidis) protein is Probable tRNA sulfurtransferase.